A 70-amino-acid chain; its full sequence is Small, acid-soluble spore protein 1 (70 aa).

The protein belongs to the alpha/beta-type SASP family.

Its function is as follows. SASP are bound to spore DNA. They are double-stranded DNA-binding proteins that cause DNA to change to an a-like conformation. They protect the DNA backbone from chemical and enzymatic cleavage and are thus involved in dormant spore's high resistance to UV light. The sequence is that of Small, acid-soluble spore protein 1 from Bacillus subtilis.